The primary structure comprises 346 residues: 2,5-dichlorohydroquinone reductive dechlorinase (346 aa).

A GST N-terminal domain is found at 43 to 154; it reads PRFELFHFVF…YLCDALSGGT (112 aa). One can recognise a GST C-terminal domain in the interval 189-335; sequence DRRPESMQAV…AIIQWPGHPP (147 aa).

Belongs to the GST superfamily.

The catalysed reaction is 2,5-dichlorohydroquinone + 2 glutathione = chlorohydroquinone + glutathione disulfide + chloride + H(+). It carries out the reaction chlorohydroquinone + 2 glutathione = hydroquinone + glutathione disulfide + chloride + H(+). Its pathway is xenobiotic degradation; gamma-hexachlorocyclohexane degradation. In terms of biological role, catalyzes the degradation of 2,5-dichlorohydroquinone (2,5-DCHQ) into hydroquinone (HQ) via chlorohydroquinone (CHQ). Is involved in the degradation pathway that allows S.japonicum UT26 to grow on gamma-hexachlorocyclohexane (gamma-HCH or lindane) as the sole source of carbon and energy. However, the conversion of CHQ to HQ by LinD seems not to be essential for this degradation pathway, because the conversion rate of CHQ to HQ is much lower than that of 2,5-DCHQ to CHQ. CHQ is more efficiently degraded by LinE in strain UT26. In Sphingobium indicum (strain DSM 16413 / CCM 7287 / MTCC 6362 / UT26 / NBRC 101211 / UT26S) (Sphingobium japonicum), this protein is 2,5-dichlorohydroquinone reductive dechlorinase.